A 163-amino-acid polypeptide reads, in one-letter code: Large ribosomal subunit protein bL17 (163 aa).

The segment at K127 to E163 is disordered. Positions E128 to A140 are enriched in basic residues. Residues G145 to E163 are compositionally biased toward low complexity.

The protein belongs to the bacterial ribosomal protein bL17 family. Part of the 50S ribosomal subunit. Contacts protein L32.

This is Large ribosomal subunit protein bL17 from Flavobacterium johnsoniae (strain ATCC 17061 / DSM 2064 / JCM 8514 / BCRC 14874 / CCUG 350202 / NBRC 14942 / NCIMB 11054 / UW101) (Cytophaga johnsonae).